The chain runs to 51 residues: Large ribosomal subunit protein bL33 (51 aa).

It belongs to the bacterial ribosomal protein bL33 family.

The polypeptide is Large ribosomal subunit protein bL33 (Idiomarina loihiensis (strain ATCC BAA-735 / DSM 15497 / L2-TR)).